We begin with the raw amino-acid sequence, 303 residues long: Recombination-associated protein RdgC (303 aa).

Belongs to the RdgC family.

It localises to the cytoplasm. Its subcellular location is the nucleoid. Its function is as follows. May be involved in recombination. This chain is Recombination-associated protein RdgC, found in Salmonella newport (strain SL254).